The chain runs to 176 residues: Large ribosomal subunit protein uL6 (176 aa).

The protein belongs to the universal ribosomal protein uL6 family. As to quaternary structure, part of the 50S ribosomal subunit.

Its function is as follows. This protein binds to the 23S rRNA, and is important in its secondary structure. It is located near the subunit interface in the base of the L7/L12 stalk, and near the tRNA binding site of the peptidyltransferase center. The sequence is that of Large ribosomal subunit protein uL6 from Methanosarcina mazei (strain ATCC BAA-159 / DSM 3647 / Goe1 / Go1 / JCM 11833 / OCM 88) (Methanosarcina frisia).